The sequence spans 269 residues: Prespore protein Dd31 (269 aa).

Polar residues predominate over residues 1 to 17 (MEHNNNPGTPQMSSEFP). The segment at 1-35 (MEHNNNPGTPQMSSEFPASTTQTSSSAAAYDNSSH) is disordered. Residues 18 to 29 (ASTTQTSSSAAA) show a composition bias toward low complexity. The next 4 helical transmembrane spans lie at 111–131 (FGIF…VVSI), 139–159 (VDNF…LYFL), 177–197 (YAYL…FVGF), and 225–245 (VSLF…IMYL).

This sequence belongs to the SCAMP family.

It is found in the membrane. It localises to the spore coat. This Dictyostelium discoideum (Social amoeba) protein is Prespore protein Dd31 (spiA).